Consider the following 372-residue polypeptide: Beta-1,4-galactosyltransferase 2 (372 aa).

The Cytoplasmic segment spans residues 1-15 (MSRLLGGTLERVCKA). A helical; Signal-anchor for type II membrane protein membrane pass occupies residues 16 to 36 (VLLLCLLHFLVAVILYFDVYA). Residues 37 to 372 (QHLAFFSRFS…GRPPSWPPRG (336 aa)) lie on the Lumenal side of the membrane. Positions 56-97 (PAASSSSSSSNCSRPNATASSSGLPEVPSALPGPTAPTLPPC) are disordered. 2 N-linked (GlcNAc...) asparagine glycosylation sites follow: N66 and N71. The span at 66–78 (NCSRPNATASSSG) shows a compositional bias: polar residues. A disulfide bridge links C97 with C139. UDP-alpha-D-galactose-binding positions include 150–154 (PFRHR), 189–191 (FNR), 217–218 (VD), and W278. A disulfide bridge connects residues C211 and C230. Position 218 (D218) interacts with Mn(2+). 280-283 (GEDD) is a binding site for N-acetyl-D-glucosamine. Residue H311 coordinates Mn(2+). Position 311–313 (311–313 (HDR)) interacts with UDP-alpha-D-galactose. R323 contacts N-acetyl-D-glucosamine. N357 is a glycosylation site (N-linked (GlcNAc...) asparagine).

Belongs to the glycosyltransferase 7 family. Mn(2+) is required as a cofactor. Weakly expressed in various tissues. Highest expression in prostate, testis, ovary, intestine, muscle, and in fetal brain.

It is found in the golgi apparatus. The protein localises to the golgi stack membrane. The enzyme catalyses D-glucose + UDP-alpha-D-galactose = lactose + UDP + H(+). It carries out the reaction an N-acetyl-beta-D-glucosaminyl derivative + UDP-alpha-D-galactose = a beta-D-galactosyl-(1-&gt;4)-N-acetyl-beta-D-glucosaminyl derivative + UDP + H(+). It catalyses the reaction N-acetyl-D-glucosamine + UDP-alpha-D-galactose = beta-D-galactosyl-(1-&gt;4)-N-acetyl-D-glucosamine + UDP + H(+). It participates in protein modification; protein glycosylation. In terms of biological role, responsible for the synthesis of complex-type N-linked oligosaccharides in many glycoproteins as well as the carbohydrate moieties of glycolipids. Can produce lactose. This chain is Beta-1,4-galactosyltransferase 2, found in Homo sapiens (Human).